Consider the following 437-residue polypeptide: Acyl-coenzyme A thioesterase 9, mitochondrial (437 aa).

The transit peptide at 1-21 (MRRAALRLCTLSKGLLAPSRG) directs the protein to the mitochondrion. 2 consecutive HotDog ACOT-type domains span residues 84–207 (SYIE…RDSE) and 287–399 (ENSK…EKEV). Residue Lys-101 is modified to N6-acetyllysine.

It belongs to the acyl coenzyme A hydrolase family. In terms of assembly, interacts with NYAP1, NYAP2 and MYO16.

The protein localises to the mitochondrion. It localises to the mitochondrion matrix. It is found in the mitochondrion inner membrane. The catalysed reaction is butanoyl-CoA + H2O = butanoate + CoA + H(+). It catalyses the reaction propanoyl-CoA + H2O = propanoate + CoA + H(+). The enzyme catalyses hexadecanoyl-CoA + H2O = hexadecanoate + CoA + H(+). It carries out the reaction octanoyl-CoA + H2O = octanoate + CoA + H(+). The catalysed reaction is decanoyl-CoA + H2O = decanoate + CoA + H(+). It catalyses the reaction tetradecanoyl-CoA + H2O = tetradecanoate + CoA + H(+). The enzyme catalyses 4,8-dimethylnonanoyl-CoA + H2O = 4,8-dimethylnonanoate + CoA + H(+). It carries out the reaction 3-methylbutanoyl-CoA + H2O = 3-methylbutanoate + CoA + H(+). The catalysed reaction is 2-methylpropanoyl-CoA + H2O = 2-methylpropanoate + CoA + H(+). Its pathway is lipid metabolism; fatty acid metabolism. Strongly inhibited by NADH and CoA. Mitochondrial acyl-CoA thioesterase. Catalyzes the hydrolysis of acyl-CoAs into free fatty acids and coenzyme A (CoA), regulating their respective intracellular levels. Regulates both mitochondrial lipid and amino acid metabolism. In Bos taurus (Bovine), this protein is Acyl-coenzyme A thioesterase 9, mitochondrial (ACOT9).